We begin with the raw amino-acid sequence, 346 residues long: Ion-translocating oxidoreductase complex subunit D (346 aa).

Helical transmembrane passes span 20-40 (IMIQVMLACLPGLMALTTFFG), 42-62 (GIIIQLVIACVTALVAEGVVL), 69-91 (LASRLGDGSALLTALLLALSLPP), and 120-140 (PFNPAMVGYVVLLISFPVQMT). Residue threonine 187 is modified to FMN phosphoryl threonine. Helical transmembrane passes span 212–232 (ASAGWTWANIGFLLGGLYLIW), 242–262 (LSLLAAMLIGAGLGHWLAPVV), 264–284 (APPLLHLFSGATMLGAFFIAT), 290–310 (AATVRGRVIFGALTGLLVWLI), and 314–334 (GGYPDGVAFAVLLANICVPLI).

This sequence belongs to the NqrB/RnfD family. As to quaternary structure, the complex is composed of six subunits: RnfA, RnfB, RnfC, RnfD, RnfE and RnfG. FMN is required as a cofactor.

Its subcellular location is the cell inner membrane. Its function is as follows. Part of a membrane-bound complex that couples electron transfer with translocation of ions across the membrane. This chain is Ion-translocating oxidoreductase complex subunit D, found in Sodalis glossinidius (strain morsitans).